The following is a 419-amino-acid chain: MNLTALKNMPVSELITLGEKMGLENLARMRKQDIIFAILKQHAKSGEDIFGDGVLEILQDGFGFLRSADSSYLAGPDDIYVSPSQIRRFNLRTGDTISGKIRPPKEGERYFALLKVNAVNYDKPENARSKILFENLTPLHANSRLRMERGNGSTEDLTARVLDLASPIGRGQRGLIVAPPKAGKTILLQNIAQSIAYNHPDCVLMVLLIDERPEEVTEMQRLVKGEVVASTFDEPASRHVQVAEMVIEKAKRLVEHKKDVIILLDSITRLARAYNTVVPASGKVLTGGVDANALHRPKRFFGAARNVEEGGSLTIIATALVDTGSKMDEVIYEEFKGTGNMELPLSRKIAEKRVFPAIDYNRSGTRKEELLTLPDELQKMWILRKIIHPMSEIDAMEFLLNKLSMTKTNDEFFDMMKRS.

The Rho RNA-BD domain occupies 48-123 (DIFGDGVLEI…LKVNAVNYDK (76 aa)). RNA-binding regions lie at residues 61 to 66 (GFGFLR), 78 to 80 (DIY), and 108 to 110 (ERY). ATP is bound by residues 169–174 (GRGQRG), 181–186 (KAGKTI), and arginine 212. The interval 284-288 (VLTGG) is RNA-binding 2.

This sequence belongs to the Rho family. As to quaternary structure, homohexamer. The homohexamer assembles into an open ring structure.

Its function is as follows. Facilitates transcription termination by a mechanism that involves Rho binding to the nascent RNA, activation of Rho's RNA-dependent ATPase activity, and release of the mRNA from the DNA template. In Buchnera aphidicola subsp. Schizaphis graminum (strain Sg), this protein is Transcription termination factor Rho.